Consider the following 151-residue polypeptide: MLP-like protein 168 (151 aa).

It belongs to the MLP family.

The protein is MLP-like protein 168 (MLP168) of Arabidopsis thaliana (Mouse-ear cress).